The sequence spans 145 residues: Pleckstrin homology domain-containing protein 1 (145 aa).

Positions 26–127 constitute a PH domain; that stretch reads NPERSGWLTK…WINSIGRSIV (102 aa). The binds specifically PtdIns3P stretch occupies residues 29–53; sequence RSGWLTKQGDYIKTWRRRWFVLKRG.

As to quaternary structure, binds PtdIns3P. Ubiquitously expressed.

Its subcellular location is the cytoplasm. Its function is as follows. Binds specifically to phosphatidylinositol 3-phosphate (PtdIns3P), but not to other phosphoinositides. This chain is Pleckstrin homology domain-containing protein 1 (PH1), found in Arabidopsis thaliana (Mouse-ear cress).